The sequence spans 329 residues: Malate dehydrogenase (329 aa).

12 to 18 (GAAGQIG) is a binding site for NAD(+). R95 and R101 together coordinate substrate. NAD(+) is bound by residues N108, Q115, and 132–134 (VGN). Residues N134 and R165 each contribute to the substrate site. H190 (proton acceptor) is an active-site residue.

The protein belongs to the LDH/MDH superfamily. MDH type 2 family.

The enzyme catalyses (S)-malate + NAD(+) = oxaloacetate + NADH + H(+). In terms of biological role, catalyzes the reversible oxidation of malate to oxaloacetate. The protein is Malate dehydrogenase of Polynucleobacter necessarius subsp. necessarius (strain STIR1).